The sequence spans 300 residues: Probable protein phosphatase 2C 2 (300 aa).

In terms of domain architecture, PPM-type phosphatase spans I23 to L298. The Mn(2+) site is built by D57, G58, D237, and D289.

This sequence belongs to the PP2C family. It depends on Mg(2+) as a cofactor. The cofactor is Mn(2+).

The protein localises to the membrane. It catalyses the reaction O-phospho-L-seryl-[protein] + H2O = L-seryl-[protein] + phosphate. The catalysed reaction is O-phospho-L-threonyl-[protein] + H2O = L-threonyl-[protein] + phosphate. Functionally, enzyme with a broad specificity. The sequence is that of Probable protein phosphatase 2C 2 from Paramecium tetraurelia.